We begin with the raw amino-acid sequence, 170 residues long: Alpha-crystallin A chain (170 aa).

Position 1 is an N-acetylmethionine (Met-1). The required for complex formation with BFSP1 and BFSP2 stretch occupies residues 1 to 63 (MDVTIQQPWF…RTALDSGISE (63 aa)). The residue at position 6 (Gln-6) is a Deamidated glutamine; partial. Ser-45 carries the phosphoserine modification. The residue at position 50 (Gln-50) is a Deamidated glutamine; partial. The sHSP domain maps to 52–161 (LFRTALDSGI…SERPIPVSRE (110 aa)). 2 positions are modified to N6-acetyllysine: Lys-70 and Lys-99. Residue His-100 coordinates Zn(2+). Asn-101 carries the post-translational modification Deamidated asparagine; partial. Glu-102, His-107, and His-151 together coordinate Zn(2+). The disordered stretch occupies residues 144 to 170 (PKIVDPSHSERPIPVSREEKPSSAPSS). A compositionally biased stretch (basic and acidic residues) spans 148–164 (DPSHSERPIPVSREEKP). A glycan (O-linked (GlcNAc) serine) is linked at Ser-159.

Belongs to the small heat shock protein (HSP20) family. As to quaternary structure, heteromer composed of three CRYAA and one CRYAB subunits. Inter-subunit bridging via zinc ions enhances stability, which is crucial as there is no protein turn over in the lens. Can also form homodimers and homotetramers (dimers of dimers) which serve as the building blocks of homooligomers. Within homooligomers, the zinc-binding motif is created from residues of 3 different molecules. His-100 and Glu-102 from one molecule are ligands of the zinc ion, and His-107 and His-151 residues from additional molecules complete the site with tetrahedral coordination geometry. Part of a complex required for lens intermediate filament formation composed of BFSP1, BFSP2 and CRYAA. In terms of processing, acetylation at Lys-70 may increase chaperone activity. Post-translationally, undergoes age-dependent proteolytical cleavage at the C-terminus.

It localises to the cytoplasm. The protein localises to the nucleus. Its function is as follows. Contributes to the transparency and refractive index of the lens. Acts as a chaperone, preventing aggregation of various proteins under a wide range of stress conditions. Required for the correct formation of lens intermediate filaments as part of a complex composed of BFSP1, BFSP2 and CRYAA. This Bradypus variegatus (Brown-throated three-fingered sloth) protein is Alpha-crystallin A chain (CRYAA).